Consider the following 391-residue polypeptide: Tryptophan synthase beta chain (391 aa).

N6-(pyridoxal phosphate)lysine is present on Lys84.

This sequence belongs to the TrpB family. As to quaternary structure, tetramer of two alpha and two beta chains. It depends on pyridoxal 5'-phosphate as a cofactor.

It carries out the reaction (1S,2R)-1-C-(indol-3-yl)glycerol 3-phosphate + L-serine = D-glyceraldehyde 3-phosphate + L-tryptophan + H2O. The protein operates within amino-acid biosynthesis; L-tryptophan biosynthesis; L-tryptophan from chorismate: step 5/5. Its function is as follows. The beta subunit is responsible for the synthesis of L-tryptophan from indole and L-serine. In Thermoanaerobacter sp. (strain X514), this protein is Tryptophan synthase beta chain.